The following is a 586-amino-acid chain: Eukaryotic translation initiation factor 3 subunit D (586 aa).

2 disordered regions span residues 16-37 and 104-176; these read EDSW…YAPF and KRTF…REPS. Residues 108-131 show a composition bias toward gly residues; the sequence is GRGGGTVFRGRAQRGGAGQRGGRA. The span at 162–174 shows a compositional bias: basic and acidic residues; the sequence is GWKDYDKPQRTRE. An RNA gate region spans residues 301–315; that stretch reads SIDLVTVNENAADAP. A disordered region spans residues 563–586; sequence ANTFEEDDEAADEQEEKATEESEE. Acidic residues predominate over residues 566 to 577; that stretch reads FEEDDEAADEQE.

The protein belongs to the eIF-3 subunit D family. Component of the eukaryotic translation initiation factor 3 (eIF-3) complex.

Its subcellular location is the cytoplasm. Functionally, mRNA cap-binding component of the eukaryotic translation initiation factor 3 (eIF-3) complex, which is involved in protein synthesis of a specialized repertoire of mRNAs and, together with other initiation factors, stimulates binding of mRNA and methionyl-tRNAi to the 40S ribosome. The eIF-3 complex specifically targets and initiates translation of a subset of mRNAs involved in cell proliferation. In the eIF-3 complex, eif3d specifically recognizes and binds the 7-methylguanosine cap of a subset of mRNAs. This chain is Eukaryotic translation initiation factor 3 subunit D, found in Aspergillus clavatus (strain ATCC 1007 / CBS 513.65 / DSM 816 / NCTC 3887 / NRRL 1 / QM 1276 / 107).